The following is a 1148-amino-acid chain: Ice nucleation protein (1148 aa).

Disordered regions lie at residues 110-131 (ADPASTSTSTSTSTLTPMPTAI), 222-256 (YGSTQTSGEDSSLTAGYGSTQTAQEGSNLTAGYGS), and 367-394 (GSTQTSGSDSSLTAGYGSTQTAQEGSNL). The span at 114–128 (STSTSTSTSTLTPMP) shows a compositional bias: low complexity. The octapeptide periodicity stretch occupies residues 180–1099 (ATYGSTLSGD…LSAGEDSTLI (920 aa)). Polar residues predominate over residues 230 to 250 (EDSSLTAGYGSTQTAQEGSNL).

It belongs to the bacterial ice nucleation protein family.

Its subcellular location is the cell outer membrane. Functionally, ice nucleation proteins enable bacteria to nucleate crystallization in supercooled water. The chain is Ice nucleation protein (inaK) from Pseudomonas syringae.